The following is a 186-amino-acid chain: Histone deacetylase complex subunit SAP25 (186 aa).

2 disordered regions span residues 1–25 (MSPLPLRDPSHQANAGPRLVEPSCG) and 148–186 (EQTPNCVASSLPSTSCPDPVSVSEDPGPSGDQSCSGTDT). Composition is skewed to polar residues over residues 148–163 (EQTPNCVASSLPSTSC) and 177–186 (GDQSCSGTDT).

May be a component of the mSIN3A corepressor complex. Interacts with SIN3A and HDAC2. As to expression, widely expressed.

It is found in the nucleus. The protein localises to the cytoplasm. Functionally, involved in the transcriptional repression mediated by the mSIN3A but not the N-CoR corepressor complex. This Mus musculus (Mouse) protein is Histone deacetylase complex subunit SAP25 (Sap25).